A 293-amino-acid chain; its full sequence is Lysosomal amino acid transporter 1 homolog (293 aa).

The Lumenal portion of the chain corresponds to Met-1 to Ala-37. 2 N-linked (GlcNAc...) asparagine glycosylation sites follow: Asn-10 and Asn-16. Residues Trp-34 to Tyr-100 form the PQ-loop 1 domain. Residues Ser-38–Ile-58 traverse the membrane as a helical segment. Over Lys-59 to Ser-71 the chain is Cytoplasmic. Residues Leu-72–Ala-92 form a helical membrane-spanning segment. At Asp-93–Pro-96 the chain is on the lumenal side. Residues Leu-97–Phe-117 form a helical membrane-spanning segment. At His-118–Pro-127 the chain is on the cytoplasmic side. The chain crosses the membrane as a helical span at residues Leu-128–Leu-148. The Lumenal portion of the chain corresponds to Leu-149–Val-182. A helical membrane pass occupies residues Ile-183 to Ile-203. The region spanning Ser-191–Gln-243 is the PQ-loop 2 domain. Topologically, residues Arg-204–Gly-214 are cytoplasmic. A helical membrane pass occupies residues Ile-215–Leu-235. The Lumenal portion of the chain corresponds to Leu-236–Pro-254. A helical membrane pass occupies residues Trp-255–Val-275. Topologically, residues Tyr-276–Ser-293 are cytoplasmic. The Di-leucine motif motif lies at Leu-290 to Leu-291.

Belongs to the laat-1 family. In terms of tissue distribution, ubiquitously expressed.

The protein resides in the lysosome membrane. Functionally, amino acid transporter that specifically mediates the pH-dependent export of the cationic amino acids arginine, histidine and lysine from lysosomes. The chain is Lysosomal amino acid transporter 1 homolog from Mus musculus (Mouse).